The chain runs to 122 residues: Large ribosomal subunit protein uL14 (122 aa).

It belongs to the universal ribosomal protein uL14 family. Part of the 50S ribosomal subunit. Forms a cluster with proteins L3 and L19. In the 70S ribosome, L14 and L19 interact and together make contacts with the 16S rRNA in bridges B5 and B8.

In terms of biological role, binds to 23S rRNA. Forms part of two intersubunit bridges in the 70S ribosome. The chain is Large ribosomal subunit protein uL14 from Borrelia turicatae (strain 91E135).